The chain runs to 217 residues: Small ribosomal subunit protein uS3 (217 aa).

The 69-residue stretch at 38–106 (IRKFIDNELK…KVHINVIEIK (69 aa)) folds into the KH type-2 domain.

Belongs to the universal ribosomal protein uS3 family. In terms of assembly, part of the 30S ribosomal subunit. Forms a tight complex with proteins S10 and S14.

Binds the lower part of the 30S subunit head. Binds mRNA in the 70S ribosome, positioning it for translation. The polypeptide is Small ribosomal subunit protein uS3 (Staphylococcus haemolyticus (strain JCSC1435)).